The following is a 99-amino-acid chain: Aspartyl/glutamyl-tRNA(Asn/Gln) amidotransferase subunit C (99 aa).

Belongs to the GatC family. Heterotrimer of A, B and C subunits.

It catalyses the reaction L-glutamyl-tRNA(Gln) + L-glutamine + ATP + H2O = L-glutaminyl-tRNA(Gln) + L-glutamate + ADP + phosphate + H(+). It carries out the reaction L-aspartyl-tRNA(Asn) + L-glutamine + ATP + H2O = L-asparaginyl-tRNA(Asn) + L-glutamate + ADP + phosphate + 2 H(+). Allows the formation of correctly charged Asn-tRNA(Asn) or Gln-tRNA(Gln) through the transamidation of misacylated Asp-tRNA(Asn) or Glu-tRNA(Gln) in organisms which lack either or both of asparaginyl-tRNA or glutaminyl-tRNA synthetases. The reaction takes place in the presence of glutamine and ATP through an activated phospho-Asp-tRNA(Asn) or phospho-Glu-tRNA(Gln). The sequence is that of Aspartyl/glutamyl-tRNA(Asn/Gln) amidotransferase subunit C from Corynebacterium glutamicum (strain R).